We begin with the raw amino-acid sequence, 403 residues long: Phosphopentomutase (403 aa).

Mn(2+) is bound by residues D13, D298, H303, D339, H340, and H351.

The protein belongs to the phosphopentomutase family. Mn(2+) serves as cofactor.

The protein localises to the cytoplasm. The enzyme catalyses 2-deoxy-alpha-D-ribose 1-phosphate = 2-deoxy-D-ribose 5-phosphate. It carries out the reaction alpha-D-ribose 1-phosphate = D-ribose 5-phosphate. Its pathway is carbohydrate degradation; 2-deoxy-D-ribose 1-phosphate degradation; D-glyceraldehyde 3-phosphate and acetaldehyde from 2-deoxy-alpha-D-ribose 1-phosphate: step 1/2. In terms of biological role, isomerase that catalyzes the conversion of deoxy-ribose 1-phosphate (dRib-1-P) and ribose 1-phosphate (Rib-1-P) to deoxy-ribose 5-phosphate (dRib-5-P) and ribose 5-phosphate (Rib-5-P), respectively. This Streptococcus suis (strain 05ZYH33) protein is Phosphopentomutase.